A 50-amino-acid polypeptide reads, in one-letter code: Large ribosomal subunit protein bL33 (50 aa).

This sequence belongs to the bacterial ribosomal protein bL33 family.

The protein is Large ribosomal subunit protein bL33 of Sulfurimonas denitrificans (strain ATCC 33889 / DSM 1251) (Thiomicrospira denitrificans (strain ATCC 33889 / DSM 1251)).